We begin with the raw amino-acid sequence, 1679 residues long: GRIP and coiled-coil domain-containing protein 2 (1679 aa).

M1 carries the post-translational modification N-acetylmethionine. Disordered stretches follow at residues 1–23 (MEDSAQDAVTAAPSGTPKSKLET) and 1466–1522 (LKSE…SAGT). Positions 35 to 1469 (KQMMLLQKAK…ETQLFQLKSE (1435 aa)) form a coiled coil. Phosphoserine is present on residues S1474 and S1478. Over residues 1474–1483 (SPASSHQPSK) the composition is skewed to polar residues. Residues 1569–1608 (HLNGLLRETEATNAILMEQIKLLKSEIRRLERNQEREKSV) form a mediates interaction with RAB6A region. Residues 1569–1679 (HLNGLLRETE…SYLHSWSGLR (111 aa)) are mediates interaction with RAB9A. The 51-residue stretch at 1604–1654 (REKSVANLEYLKNVLLRFIFLKPGSERERLLPVIDTMLQLSPEEKGKLATV) folds into the GRIP domain.

In terms of assembly, homodimer. Interacts (via GRIP domain) with RAB6A (preferentially in its GTP-bound form). May interact (RAB6A-dependent) with ARL1; might be involved in GCC2 Golgi localization. Interacts with CLASP1 and CLASP2; recruits both proteins to membranes of the TGN. Interacts with STX16. Interacts (probably via GRIP domain) with RAB9A (preferentially in its GTP-bound form).

It localises to the cytoplasm. The protein localises to the golgi apparatus. It is found in the trans-Golgi network membrane. Golgin which probably tethers transport vesicles to the trans-Golgi network (TGN) and regulates vesicular transport between the endosomes and the Golgi. As a RAB9A effector it is involved in recycling of the mannose 6-phosphate receptor from the late endosomes to the TGN. May also play a role in transport between the recycling endosomes and the Golgi. Required for maintenance of the Golgi structure, it is involved in the biogenesis of noncentrosomal, Golgi-associated microtubules through recruitment of CLASP1 and CLASP2. This Rattus norvegicus (Rat) protein is GRIP and coiled-coil domain-containing protein 2 (Gcc2).